The chain runs to 548 residues: Aromatic ammonia-lyase (548 aa).

Tyr55 (proton donor/acceptor) is an active-site residue. The segment at residues 144–146 is a cross-link (5-imidazolinone (Ala-Gly)); the sequence is ASG. Ser145 carries the post-translational modification 2,3-didehydroalanine (Ser). (E)-cinnamate-binding residues include Asn200, Gln288, Arg294, Asn324, Lys396, Glu425, and Asn428.

Belongs to the PAL/histidase family. Homotetramer. In terms of processing, contains an active site 4-methylidene-imidazol-5-one (MIO), which is formed autocatalytically by cyclization and dehydration of residues Ala-Ser-Gly.

The catalysed reaction is L-phenylalanine = (E)-cinnamate + NH4(+). It carries out the reaction L-tyrosine = (E)-4-coumarate + NH4(+). It catalyses the reaction 3,4-dimethoxy-L-phenylalanine = 3,4-dimethoxy-(E)-cinnamate + NH4(+). Its pathway is phenylpropanoid metabolism; trans-cinnamate biosynthesis; trans-cinnamate from L-phenylalanine: step 1/1. In terms of biological role, aromatic ammonia-lyase (AAL) that shows reduced activity to catalyze the non-oxidative ammonia elimination from the canonical AAL substrates L-Phe and L-Tyr, contrasted by its pronounced efficiency towards substrates with electron-donor aromatic substituents such as 3,4-dimethoxy-L-phenylalanine. Is also able to catalyze the reverse reaction in vitro, i.e. the ammonia addition reaction to cinnamate derivatives, producing enantiopure phenylalanine derivatives. Shows no activity with L-His. The polypeptide is Aromatic ammonia-lyase (Loktanella atrilutea).